The sequence spans 315 residues: Ribose-phosphate pyrophosphokinase (315 aa).

ATP contacts are provided by residues 37–39 (DGE) and 96–97 (RQ). Positions 131 and 170 each coordinate Mg(2+). The active site involves K194. D-ribose 5-phosphate-binding positions include R196, D220, and 224-228 (DTGGT).

Belongs to the ribose-phosphate pyrophosphokinase family. Class I subfamily. In terms of assembly, homohexamer. It depends on Mg(2+) as a cofactor.

It localises to the cytoplasm. It catalyses the reaction D-ribose 5-phosphate + ATP = 5-phospho-alpha-D-ribose 1-diphosphate + AMP + H(+). It functions in the pathway metabolic intermediate biosynthesis; 5-phospho-alpha-D-ribose 1-diphosphate biosynthesis; 5-phospho-alpha-D-ribose 1-diphosphate from D-ribose 5-phosphate (route I): step 1/1. Its function is as follows. Involved in the biosynthesis of the central metabolite phospho-alpha-D-ribosyl-1-pyrophosphate (PRPP) via the transfer of pyrophosphoryl group from ATP to 1-hydroxyl of ribose-5-phosphate (Rib-5-P). This is Ribose-phosphate pyrophosphokinase from Salmonella typhi.